A 374-amino-acid polypeptide reads, in one-letter code: MRADTNNYRELFLRDVPMLDTRAPTEFSKGAFPGAVNLPLMDDAERQQVGLCYKQRGQDAAIALGHQLVSGPIKARRVAAWADFARAHPDGYLYCFRGGLRSQISQAWLKNEAGIEYPRVIGGYKAMRGFLLQTIDDAVAQCGFVVLGGMTGTGKTDLLRQLDNSLDLEHHAHHRGSSFGKHAVGQPTQIDFDNRLAIDILKKRAAGHDRFVLEDESQAIGACSLPFELYRGMQEYPVVWLEDTTENRVNRILRDYVIDLCAEFVDVHGPEQGFDRFAERLRQSLDNISRRLGGERHRQLAGVMDAALAEQQRSGRVDAHRAWIAALLAQYYDPMYAYQRQRKSQRIVFAGDHQSVLQYLRDPPAVGRALKGFP.

A Rhodanese domain is found at 12 to 136 (FLRDVPMLDT…MRGFLLQTID (125 aa)). Cysteine 95 functions as the S-selanylcysteine intermediate in the catalytic mechanism.

The protein belongs to the SelU family. In terms of assembly, monomer.

It carries out the reaction 5-methylaminomethyl-2-thiouridine(34) in tRNA + selenophosphate + (2E)-geranyl diphosphate + H2O + H(+) = 5-methylaminomethyl-2-selenouridine(34) in tRNA + (2E)-thiogeraniol + phosphate + diphosphate. It catalyses the reaction 5-methylaminomethyl-2-thiouridine(34) in tRNA + (2E)-geranyl diphosphate = 5-methylaminomethyl-S-(2E)-geranyl-thiouridine(34) in tRNA + diphosphate. The catalysed reaction is 5-methylaminomethyl-S-(2E)-geranyl-thiouridine(34) in tRNA + selenophosphate + H(+) = 5-methylaminomethyl-2-(Se-phospho)selenouridine(34) in tRNA + (2E)-thiogeraniol. The enzyme catalyses 5-methylaminomethyl-2-(Se-phospho)selenouridine(34) in tRNA + H2O = 5-methylaminomethyl-2-selenouridine(34) in tRNA + phosphate. Functionally, involved in the post-transcriptional modification of the uridine at the wobble position (U34) of tRNA(Lys), tRNA(Glu) and tRNA(Gln). Catalyzes the conversion of 2-thiouridine (S2U-RNA) to 2-selenouridine (Se2U-RNA). Acts in a two-step process involving geranylation of 2-thiouridine (S2U) to S-geranyl-2-thiouridine (geS2U) and subsequent selenation of the latter derivative to 2-selenouridine (Se2U) in the tRNA chain. In Bordetella petrii (strain ATCC BAA-461 / DSM 12804 / CCUG 43448), this protein is tRNA 2-selenouridine synthase.